The primary structure comprises 741 residues: Catalase-peroxidase 2 (741 aa).

The signal sequence occupies residues Met1 to Ala28. The tryptophyl-tyrosyl-methioninium (Trp-Tyr) (with M-254) cross-link spans Trp107 to Tyr228. The active-site Proton acceptor is the His108. A cross-link (tryptophyl-tyrosyl-methioninium (Tyr-Met) (with W-107)) is located at residues Tyr228 to Met254. Residue His269 participates in heme b binding.

It belongs to the peroxidase family. Peroxidase/catalase subfamily. Homodimer or homotetramer. Heme b serves as cofactor. In terms of processing, formation of the three residue Trp-Tyr-Met cross-link is important for the catalase, but not the peroxidase activity of the enzyme.

It carries out the reaction H2O2 + AH2 = A + 2 H2O. It catalyses the reaction 2 H2O2 = O2 + 2 H2O. Bifunctional enzyme with both catalase and broad-spectrum peroxidase activity. This chain is Catalase-peroxidase 2, found in Burkholderia vietnamiensis (strain G4 / LMG 22486) (Burkholderia cepacia (strain R1808)).